Here is a 283-residue protein sequence, read N- to C-terminus: Elongation factor Ts (283 aa).

Residues 80 to 83 (TDFV) are involved in Mg(2+) ion dislocation from EF-Tu.

Belongs to the EF-Ts family.

It localises to the cytoplasm. Its function is as follows. Associates with the EF-Tu.GDP complex and induces the exchange of GDP to GTP. It remains bound to the aminoacyl-tRNA.EF-Tu.GTP complex up to the GTP hydrolysis stage on the ribosome. This Histophilus somni (strain 129Pt) (Haemophilus somnus) protein is Elongation factor Ts.